A 635-amino-acid polypeptide reads, in one-letter code: Probable extracellular metalloproteinase 1 (635 aa).

Positions 1-19 (MHGLLLAAGLLSLPLHVLA) are cleaved as a signal peptide. Residues 20–246 (HPQPSTSTSL…VHNVVDYVAH (227 aa)) constitute a propeptide that is removed on maturation. N287 carries N-linked (GlcNAc...) asparagine glycosylation. H430 is a Zn(2+) binding site. E431 is an active-site residue. Residue H434 participates in Zn(2+) binding. N475, N594, and N623 each carry an N-linked (GlcNAc...) asparagine glycan.

This sequence belongs to the peptidase M36 family. Zn(2+) serves as cofactor.

The protein resides in the secreted. Its function is as follows. Secreted metalloproteinase probably acting as a virulence factor. This Trichophyton verrucosum (strain HKI 0517) protein is Probable extracellular metalloproteinase 1 (MEP1).